The primary structure comprises 164 residues: Thiol peroxidase (164 aa).

In terms of domain architecture, Thioredoxin spans 18 to 164; sequence KKVGDSAPDF…YEAVLSHLNK (147 aa). C60 serves as the catalytic Cysteine sulfenic acid (-SOH) intermediate. A disulfide bond links C60 and C94.

Belongs to the peroxiredoxin family. Tpx subfamily. As to quaternary structure, homodimer.

The catalysed reaction is a hydroperoxide + [thioredoxin]-dithiol = an alcohol + [thioredoxin]-disulfide + H2O. Its function is as follows. Thiol-specific peroxidase that catalyzes the reduction of hydrogen peroxide and organic hydroperoxides to water and alcohols, respectively. Plays a role in cell protection against oxidative stress by detoxifying peroxides. The sequence is that of Thiol peroxidase from Oceanobacillus iheyensis (strain DSM 14371 / CIP 107618 / JCM 11309 / KCTC 3954 / HTE831).